We begin with the raw amino-acid sequence, 906 residues long: Protein translocase subunit SecA (906 aa).

ATP contacts are provided by residues Gln-86, Gly-104–Thr-108, and Asp-499. Residues Pro-863–Asn-887 form a disordered region. The Zn(2+) site is built by Cys-890, Cys-892, Cys-901, and His-902.

It belongs to the SecA family. As to quaternary structure, monomer and homodimer. Part of the essential Sec protein translocation apparatus which comprises SecA, SecYEG and auxiliary proteins SecDF-YajC and YidC. Requires Zn(2+) as cofactor.

The protein resides in the cell inner membrane. Its subcellular location is the cytoplasm. It carries out the reaction ATP + H2O + cellular proteinSide 1 = ADP + phosphate + cellular proteinSide 2.. Part of the Sec protein translocase complex. Interacts with the SecYEG preprotein conducting channel. Has a central role in coupling the hydrolysis of ATP to the transfer of proteins into and across the cell membrane, serving both as a receptor for the preprotein-SecB complex and as an ATP-driven molecular motor driving the stepwise translocation of polypeptide chains across the membrane. This chain is Protein translocase subunit SecA, found in Rickettsia rickettsii (strain Iowa).